The sequence spans 260 residues: Snake venom serine protease gussurobin (260 aa).

The N-terminal stretch at 1–18 (MVLIRVLANLLILQLSYA) is a signal peptide. Residues 19 to 24 (QKSSEL) constitute a propeptide that is removed on maturation. One can recognise a Peptidase S1 domain in the interval 25–251 (IIGGDECNIN…YTEWIQSTIA (227 aa)). Intrachain disulfides connect Cys-31–Cys-165, Cys-52–Cys-68, Cys-100–Cys-258, Cys-144–Cys-212, Cys-176–Cys-191, and Cys-202–Cys-227. Active-site charge relay system residues include His-67 and Asp-112. N-linked (GlcNAc...) asparagine glycans are attached at residues Asn-123 and Asn-124. Residue Ser-206 is the Charge relay system of the active site.

Belongs to the peptidase S1 family. Snake venom subfamily. In terms of assembly, monomer. As to expression, expressed by the venom gland.

It is found in the secreted. Snake venom serine protease that may act in the hemostasis system of the prey. The polypeptide is Snake venom serine protease gussurobin (Gloydius ussuriensis (Ussuri mamushi)).